A 138-amino-acid polypeptide reads, in one-letter code: Nucleoside diphosphate kinase (138 aa).

Lysine 9, phenylalanine 57, arginine 85, threonine 91, arginine 102, and asparagine 112 together coordinate ATP. Histidine 115 serves as the catalytic Pros-phosphohistidine intermediate.

Belongs to the NDK family. Homotetramer. Requires Mg(2+) as cofactor.

The protein localises to the cytoplasm. The catalysed reaction is a 2'-deoxyribonucleoside 5'-diphosphate + ATP = a 2'-deoxyribonucleoside 5'-triphosphate + ADP. The enzyme catalyses a ribonucleoside 5'-diphosphate + ATP = a ribonucleoside 5'-triphosphate + ADP. Functionally, major role in the synthesis of nucleoside triphosphates other than ATP. The ATP gamma phosphate is transferred to the NDP beta phosphate via a ping-pong mechanism, using a phosphorylated active-site intermediate. The polypeptide is Nucleoside diphosphate kinase (Desulforapulum autotrophicum (strain ATCC 43914 / DSM 3382 / VKM B-1955 / HRM2) (Desulfobacterium autotrophicum)).